Consider the following 61-residue polypeptide: Temporin-ALi (61 aa).

An N-terminal signal peptide occupies residues 1–22 (MFPLKKSLLLLFFLATINLSLC). Residues 23–46 (EQERNAEEERRDEPDERNAEVEKR) constitute a propeptide that is removed on maturation. Leu59 carries the post-translational modification Leucine amide.

This sequence belongs to the frog skin active peptide (FSAP) family. Temporin subfamily. As to expression, expressed by the skin glands.

The protein localises to the secreted. Its function is as follows. Antimicrobial peptide with activity against Gram-positive and Gram-negative bacteria and against fungi. Has been tested against S.aureus (MIC=7.5 ug/mL), B.pumilus (MIC=7.5 ug/mL), B.cereus (MIC=75.0 ug/mL), E.coli (MIC=7.5 ug/mL), B.dysenteriae (MIC=20.0 ug/mL), A.cacoaceticus (MIC=60.0 ug/mL), P.aeruginosa (MIC=5.0 ug/mL) and C.albicans (MIC=5.0 ug/mL). Also shows a weak hemolytic activity. In Amolops loloensis (Lolokou Sucker Frog), this protein is Temporin-ALi.